The sequence spans 170 residues: Ureidoglycolate lyase (170 aa).

Belongs to the ureidoglycolate lyase family. In terms of assembly, homodimer. Requires Ni(2+) as cofactor.

The catalysed reaction is (S)-ureidoglycolate = urea + glyoxylate. The protein operates within nitrogen metabolism; (S)-allantoin degradation. Catalyzes the catabolism of the allantoin degradation intermediate (S)-ureidoglycolate, generating urea and glyoxylate. Involved in the utilization of allantoin as nitrogen source. The chain is Ureidoglycolate lyase from Stutzerimonas stutzeri (strain A1501) (Pseudomonas stutzeri).